Consider the following 557-residue polypeptide: Calcium-dependent protein kinase 4 (557 aa).

Residues 1 to 72 (MGNTCRGSIG…LVSPRKASMN (72 aa)) are disordered. Gly2 carries the N-myristoyl glycine lipid modification. Over residues 15-27 (QGYTQPEDSSCST) the composition is skewed to polar residues. A compositionally biased stretch (low complexity) spans 28–48 (NHNPSSGNSYSSSDNFSPTSN). Positions 94–352 (YTLGRKLGQG…AHEVLCHPWI (259 aa)) constitute a Protein kinase domain. ATP contacts are provided by residues 100–108 (LGQGQFGTT) and Lys123. The active-site Proton acceptor is the Asp218. Positions 358-388 (APDRALDPAVLSRLKQFSAMNKLKKMALRVI) are autoinhibitory domain. EF-hand domains are found at residues 395-430 (EEIA…YGST), 431-466 (LKDT…LNKL), 467-502 (EREE…HNMT), and 506-536 (FEDI…GNPC). Residues Asp408, Asp410, Ser412, Glu419, Asp444, Asp446, Ser448, Thr450, Glu455, Asp480, Asp482, Ser484, Tyr486, Glu491, Asp514, Asp516, Asp518, Arg520, and Glu525 each contribute to the Ca(2+) site.

Belongs to the protein kinase superfamily. Ser/Thr protein kinase family. CDPK subfamily.

Its subcellular location is the membrane. It carries out the reaction L-seryl-[protein] + ATP = O-phospho-L-seryl-[protein] + ADP + H(+). The catalysed reaction is L-threonyl-[protein] + ATP = O-phospho-L-threonyl-[protein] + ADP + H(+). Activated by calcium. Autophosphorylation may play an important role in the regulation of the kinase activity. Regulates the production of reactive oxygen species (ROS) by NADPH oxidase. This is Calcium-dependent protein kinase 4 (CPK4) from Solanum tuberosum (Potato).